The chain runs to 328 residues: MGAAPRLSAPRVLVLWAALGAAAHIGPAPDPEDWWSYKDNLQGNFVPGPPFWGLVNAAWSLCAVGKRQSPVDVDLKRVLYDPFLPPLRLSTGGEKLRGTLYNTGRHVSFLPAPRPVVNVSGGPLLYSHRLSELRLLFGARDGAGSEHQINHQGFSAEVQLIHFNQELYGNLSAATRGPNGLAILSLFVNVAGSSNPFLSRLLNRDTITRISYKNDAYFLQDLSLELLFPESFGFITYQGSLSTPPCSETVTWILIDRALNITSLQMHSLRLLSQNPPSQIFQSLSGNGRPLQPLAHRALRGNRDPRHPERRCRGPNYRLHVDDVPHGL.

A signal peptide spans Met1–Ala23. The region spanning Asp33–Arg303 is the Alpha-carbonic anhydrase domain. Asn118 carries an N-linked (GlcNAc...) asparagine glycan. Residues Arg300–Leu328 form a disordered region. Positions Leu319–Leu328 are enriched in basic and acidic residues.

Belongs to the alpha-carbonic anhydrase family.

Its subcellular location is the secreted. Functionally, does not have a catalytic activity. This is Carbonic anhydrase-related protein 11 (CA11) from Ovis aries (Sheep).